The chain runs to 981 residues: Rab3 GTPase-activating protein catalytic subunit (981 aa).

A phosphoserine mark is found at Ser-83, Ser-379, Ser-537, Ser-579, Ser-581, and Ser-590. The interval 592–613 (TEELKGNGQESGKKGGPKEMAN) is disordered. Ser-664 bears the Phosphoserine mark. The residue at position 908 (Thr-908) is a Phosphothreonine. Residues 908–937 (TPPEEELKRMGSPEERRQNSVSDFPPPAGR) form a disordered region. The segment covering 912–925 (EELKRMGSPEERRQ) has biased composition (basic and acidic residues).

It belongs to the Rab3-GAP catalytic subunit family. In terms of assembly, the Rab3 GTPase-activating complex is a heterodimer composed of RAB3GAP1 and RAB3GAP2. The Rab3 GTPase-activating complex interacts with DMXL2. Interacts with LMAN1. Ubiquitous.

The protein resides in the cytoplasm. It localises to the endoplasmic reticulum. Its subcellular location is the golgi apparatus. It is found in the cis-Golgi network. Its function is as follows. Catalytic subunit of the Rab3 GTPase-activating (Rab3GAP) complex composed of RAB3GAP1 and RAB3GAP2, which has GTPase-activating protein (GAP) activity towards various Rab3 subfamily members (RAB3A, RAB3B, RAB3C and RAB3D), RAB5A and RAB43, and guanine nucleotide exchange factor (GEF) activity towards RAB18. As part of the Rab3GAP complex, acts as a GAP for Rab3 proteins by converting active RAB3-GTP to the inactive form RAB3-GDP. Rab3 proteins are involved in regulated exocytosis of neurotransmitters and hormones. The Rab3GAP complex, acts as a GEF for RAB18 by promoting the conversion of inactive RAB18-GDP to the active form RAB18-GTP. Recruits and stabilizes RAB18 at the cis-Golgi membrane in fibroblasts where RAB18 is most likely activated. Also involved in RAB18 recruitment at the endoplasmic reticulum (ER) membrane where it maintains proper ER structure. Required for normal eye and brain development. May participate in neurodevelopmental processes such as proliferation, migration and differentiation before synapse formation, and non-synaptic vesicular release of neurotransmitters. The protein is Rab3 GTPase-activating protein catalytic subunit of Homo sapiens (Human).